A 306-amino-acid polypeptide reads, in one-letter code: Prophage bactoprenol glucosyl transferase homolog (306 aa).

Residues 1–227 (MKISLVVPVF…ITSFSTFPLR (227 aa)) are Cytoplasmic-facing. Residues 228–248 (IWTYIGLVVASVAFIYGAWMI) form a helical membrane-spanning segment. Topologically, residues 249–262 (LDTIIFGNAVRGYP) are periplasmic. A helical membrane pass occupies residues 263 to 283 (SLLVSILFLGGIQMIGIGVLG). The Cytoplasmic portion of the chain corresponds to 284 to 306 (EYIGRTYIETKKRPKYIIKRVKK).

Belongs to the glycosyltransferase 2 family. GtrB subfamily.

Its subcellular location is the cell inner membrane. Its function is as follows. Involved in O antigen modification. Catalyzes the transfer of the glucose residue from UDP-glucose to a lipid carrier. The sequence is that of Prophage bactoprenol glucosyl transferase homolog (yfdH) from Escherichia coli (strain K12).